Consider the following 246-residue polypeptide: MKKKQVSHAIIISVMLSFVIAVFHTIHASELTPLAQMAEGMERQDVSIDKWTLHAKQNLSLTEKEFYQKVQRLKQEYRQYDWVIAREDKMIKAIGTYTDKKNRTSFRLQLVTTLKKHNPTSYLLYEQMSLETPDSWNDTYEQFERETLGIFQEKVVIFTCLNGHLDDNMNIVLQKKANQLLNEFQARSVEHVVEPNFVSISAFTDEWEEYIMTSKHKMNLQIALRSAGMGGKHTVTVGTPIVTTEY.

Positions 1–30 are cleaved as a signal peptide; the sequence is MKKKQVSHAIIISVMLSFVIAVFHTIHASE.

This is an uncharacterized protein from Bacillus subtilis (strain 168).